A 208-amino-acid chain; its full sequence is Imidazole glycerol phosphate synthase subunit HisH (208 aa).

Residues 1-206 enclose the Glutamine amidotransferase type-1 domain; the sequence is MIVIIDYDTG…KEVTYSCKSS (206 aa). The active-site Nucleophile is the C79. Active-site residues include H181 and E183.

As to quaternary structure, heterodimer of HisH and HisF.

It localises to the cytoplasm. It catalyses the reaction 5-[(5-phospho-1-deoxy-D-ribulos-1-ylimino)methylamino]-1-(5-phospho-beta-D-ribosyl)imidazole-4-carboxamide + L-glutamine = D-erythro-1-(imidazol-4-yl)glycerol 3-phosphate + 5-amino-1-(5-phospho-beta-D-ribosyl)imidazole-4-carboxamide + L-glutamate + H(+). The enzyme catalyses L-glutamine + H2O = L-glutamate + NH4(+). Its pathway is amino-acid biosynthesis; L-histidine biosynthesis; L-histidine from 5-phospho-alpha-D-ribose 1-diphosphate: step 5/9. IGPS catalyzes the conversion of PRFAR and glutamine to IGP, AICAR and glutamate. The HisH subunit catalyzes the hydrolysis of glutamine to glutamate and ammonia as part of the synthesis of IGP and AICAR. The resulting ammonia molecule is channeled to the active site of HisF. The sequence is that of Imidazole glycerol phosphate synthase subunit HisH from Listeria monocytogenes serovar 1/2a (strain ATCC BAA-679 / EGD-e).